We begin with the raw amino-acid sequence, 122 residues long: Prefoldin subunit 1 (122 aa).

The protein belongs to the prefoldin subunit beta family. Heterohexamer of two PFD-alpha type and four PFD-beta type subunits.

In terms of biological role, binds specifically to cytosolic chaperonin (c-CPN) and transfers target proteins to it. Binds to nascent polypeptide chain and promotes folding in an environment in which there are many competing pathways for nonnative proteins. The protein is Prefoldin subunit 1 (pfdn1) of Tetraodon nigroviridis (Spotted green pufferfish).